We begin with the raw amino-acid sequence, 458 residues long: Sphingoid long chain base kinase 4 (458 aa).

Residues 103-241 enclose the DAGKc domain; sequence KRSRRFIVFI…FDLMTFEQKG (139 aa). Residues 113–115 and Thr145 contribute to the ATP site; that span reads NPH. 170-173 contacts substrate; that stretch reads GGDG. Asp172 serves as the catalytic Proton donor/acceptor. Residues Glu177, 202-204, Arg266, Arg272, and 426-428 each bind ATP; these read GSG and DGE.

It is found in the cell membrane. The protein resides in the endoplasmic reticulum membrane. It localises to the late endosome membrane. The protein localises to the golgi apparatus membrane. It catalyses the reaction a sphingoid base + ATP = a sphingoid 1-phosphate + ADP + H(+). Catalyzes the phosphorylation of the sphingoid long chain bases dihydrosphingosine (DHS) and phytosphingosine (PHS) to form dihydrosphingosine 1-phosphate (DHS-1P) and phytosphingosine 1-phosphate (PHS-1P) respectively. Involved in the biosynthesis of sphingolipids and ceramides. Involved in heat-induced transient cell cycle arrest. Accumulation of phosphorylated sphingoid long chain bases (LCBPs) stimulates calcium influx and activates calcineurin signaling. Involved in heat-stress resistance. This chain is Sphingoid long chain base kinase 4 (lcb4), found in Schizosaccharomyces pombe (strain 972 / ATCC 24843) (Fission yeast).